The sequence spans 272 residues: Protein FAM210A (272 aa).

A DUF1279 domain is found at aspartate 117–lysine 229. Residues valine 136–alanine 156 traverse the membrane as a helical segment. The stretch at lysine 229–valine 271 forms a coiled coil. The segment at lysine 246–glutamate 272 is disordered.

The protein belongs to the FAM210 family. As to quaternary structure, interacts with ATAD3A.

It localises to the membrane. The protein localises to the mitochondrion. Its subcellular location is the cytoplasm. Its function is as follows. May play a role in the structure and strength of both muscle and bone. The sequence is that of Protein FAM210A (FAM210A) from Homo sapiens (Human).